Reading from the N-terminus, the 380-residue chain is Erythronate-4-phosphate dehydrogenase (380 aa).

Substrate contacts are provided by serine 45 and threonine 66. 2 residues coordinate NAD(+): aspartate 146 and threonine 174. The active site involves arginine 207. An NAD(+)-binding site is contributed by aspartate 231. The active site involves glutamate 236. Catalysis depends on histidine 253, which acts as the Proton donor. Glycine 256 contacts NAD(+). Tyrosine 257 contributes to the substrate binding site.

It belongs to the D-isomer specific 2-hydroxyacid dehydrogenase family. PdxB subfamily. As to quaternary structure, homodimer.

It localises to the cytoplasm. The enzyme catalyses 4-phospho-D-erythronate + NAD(+) = (R)-3-hydroxy-2-oxo-4-phosphooxybutanoate + NADH + H(+). It functions in the pathway cofactor biosynthesis; pyridoxine 5'-phosphate biosynthesis; pyridoxine 5'-phosphate from D-erythrose 4-phosphate: step 2/5. Catalyzes the oxidation of erythronate-4-phosphate to 3-hydroxy-2-oxo-4-phosphonooxybutanoate. The sequence is that of Erythronate-4-phosphate dehydrogenase from Pseudomonas fluorescens (strain Pf0-1).